Here is a 252-residue protein sequence, read N- to C-terminus: ATP synthase subunit a, chloroplastic (252 aa).

The next 5 membrane-spanning stretches (helical) occupy residues 41-61 (GQVLITSWIVLGGVIIFTLLA), 100-120 (VPFLGTIFIFVFVSNWAGALL), 138-158 (DINTTVSLALLTSVSYFYAGI), 204-224 (LIVGVLVALVPLFVPIPLMLL), and 225-245 (GVFTSAIQALVFATLAGAYIG).

It belongs to the ATPase A chain family. In terms of assembly, F-type ATPases have 2 components, CF(1) - the catalytic core - and CF(0) - the membrane proton channel. CF(1) has five subunits: alpha(3), beta(3), gamma(1), delta(1), epsilon(1). CF(0) has four main subunits: a, b, b' and c.

Its subcellular location is the plastid. The protein resides in the chloroplast thylakoid membrane. Functionally, key component of the proton channel; it plays a direct role in the translocation of protons across the membrane. The protein is ATP synthase subunit a, chloroplastic of Oedogonium cardiacum (Filamentous green alga).